The sequence spans 393 residues: Ceramide synthase 4 (393 aa).

The Lumenal portion of the chain corresponds to 1-31; sequence MSFSLSEWLWQETYWLPPNVTWAELEDRDGL. A glycan (N-linked (GlcNAc...) asparagine) is linked at Asn-19. Residues 32 to 52 traverse the membrane as a helical segment; sequence VFAHPHHVLAAFPVALVLVAV. Residues 67–128 are homeobox-like; the sequence is WMGVQDPIRR…RRRRNQDRPS (62 aa). Residues 131-332 form the TLC domain; that stretch reads KKFCEACWRF…ILRMLYSFLH (202 aa). 4 helical membrane-spanning segments follow: residues 140-160, 179-199, 217-237, and 265-285; these read FVFYLCSFVGGTSILYHESWL, LYWWYLLELGFYLSLLITLPF, VGLIGFSYSVNLLRIGAVVLL, and FIMFALVFFYTRLIFFPTQVI. Residues 291-301 carry the Last loop motif motif; the sequence is DSIKNSGPFFG. Residues 304-324 form a helical membrane-spanning segment; sequence FFIVLLVMLQILHVYWFCLIL. Topologically, residues 325–393 are cytoplasmic; that stretch reads RMLYSFLHKG…CLTNGHTRAT (69 aa). A disordered region spans residues 341–393; that stretch reads RSDVEEPDSSDDEPVSEGPQLKNGMARGSRVAVTNGPRSRAAACLTNGHTRAT. Phosphoserine is present on residues Ser-342, Ser-349, and Ser-350. The span at 345-355 shows a compositional bias: acidic residues; that stretch reads EEPDSSDDEPV.

Post-translationally, phosphorylated at the C-terminus by CK2. As to expression, ubiquitously expressed, with highest levels in skin.

The protein resides in the endoplasmic reticulum membrane. It carries out the reaction sphinganine + octadecanoyl-CoA = N-(octadecanoyl)-sphinganine + CoA + H(+). The catalysed reaction is eicosanoyl-CoA + sphinganine = N-eicosanoylsphinganine + CoA + H(+). It catalyses the reaction docosanoyl-CoA + sphinganine = N-docosanoylsphinganine + CoA + H(+). The enzyme catalyses tetracosanoyl-CoA + sphinganine = N-tetracosanoylsphinganine + CoA + H(+). It carries out the reaction hexacosanoyl-CoA + sphinganine = N-hexacosanoylsphinganine + CoA + H(+). The catalysed reaction is a fatty acyl-CoA + sphing-4-enine = an N-acylsphing-4-enine + CoA + H(+). It catalyses the reaction sphing-4-enine + octadecanoyl-CoA = N-octadecanoylsphing-4-enine + CoA + H(+). The enzyme catalyses hexadecasphinganine + octadecanoyl-CoA = N-octadecanoylhexadecasphinganine + CoA + H(+). The protein operates within lipid metabolism; sphingolipid metabolism. Its function is as follows. Ceramide synthase that catalyzes formation of ceramide from sphinganine and acyl-CoA substrates, with high selectivity toward long and very-long chains (C18:0-C22:0) as acyl donor. This Mus musculus (Mouse) protein is Ceramide synthase 4.